An 862-amino-acid chain; its full sequence is Ecdysone-induced protein 78C (862 aa).

4 disordered regions span residues 28–83 (SSEQ…EEAL), 97–138 (LHFF…KQHH), 173–210 (ASLSPQQQQQRQHTHQQQQQQQQQQQHPGQQQHQLNCT), and 230–353 (ASNH…NNNN). Over residues 37–46 (KQEDLIKDFT) the composition is skewed to basic and acidic residues. The span at 47–82 (RDEEEQPSEEEAEEEDNEEDEEEEGEEEEEDEDEEA) shows a compositional bias: acidic residues. A compositionally biased stretch (polar residues) spans 105-119 (DSSTQGAYSEANSLE). 4 stretches are compositionally biased toward low complexity: residues 173 to 206 (ASLSPQQQQQRQHTHQQQQQQQQQQQHPGQQQHQ), 230 to 291 (ASNH…NNSV), 308 to 335 (QQQQPLPTTQLQQQQQHQQQLQHPQQQQ), and 342 to 353 (SSSSNGSSNNNN). A DNA-binding region (nuclear receptor) is located at residues 360–435 (FVPCKVCGDK…AGMSRDSVRY (76 aa)). NR C4-type zinc fingers lie at residues 363-383 (CKVCGDKASGYHYGVTSCEGC) and 399-418 (CLRDGKCLVIRLNRNRCQYC). The disordered stretch occupies residues 444 to 557 (ELNGAAASSA…NNNSSSGNAS (114 aa)). Residues 447–460 (GAAASSAAAGAPAS) show a composition bias toward low complexity. Residues 463–472 (VDDSTSSTLH) are compositionally biased toward polar residues. Low complexity predominate over residues 475–508 (HLQQQQQQHLLQQQQQQQHQPQLQQHHQLQQQPH). Over residues 516 to 533 (TPSTPQTPQMCSIASSPS) the composition is skewed to polar residues. Low complexity predominate over residues 539–555 (NSANNNNNNNNNSSSGN). The NR LBD domain maps to 626–855 (YTEELTRELM…PPLFAEIFDI (230 aa)).

This sequence belongs to the nuclear hormone receptor family. NR1 subfamily.

The protein localises to the nucleus. Its function is as follows. Induces the early late puff 78C which triggers puparium formation and development. In Drosophila melanogaster (Fruit fly), this protein is Ecdysone-induced protein 78C (Eip78C).